The chain runs to 90 residues: Probable Fe(2+)-trafficking protein (90 aa).

The protein belongs to the Fe(2+)-trafficking protein family.

Its function is as follows. Could be a mediator in iron transactions between iron acquisition and iron-requiring processes, such as synthesis and/or repair of Fe-S clusters in biosynthetic enzymes. The chain is Probable Fe(2+)-trafficking protein from Koribacter versatilis (strain Ellin345).